The chain runs to 211 residues: Uracil phosphoribosyltransferase (211 aa).

5-phospho-alpha-D-ribose 1-diphosphate-binding positions include Arg78, Arg103, and 130 to 138; that span reads DPMLATGGS. Residues Ile193 and 198–200 contribute to the uracil site; that span reads GDA. Asp199 is a 5-phospho-alpha-D-ribose 1-diphosphate binding site.

The protein belongs to the UPRTase family. Requires Mg(2+) as cofactor.

The enzyme catalyses UMP + diphosphate = 5-phospho-alpha-D-ribose 1-diphosphate + uracil. Its pathway is pyrimidine metabolism; UMP biosynthesis via salvage pathway; UMP from uracil: step 1/1. Allosterically activated by GTP. Its function is as follows. Catalyzes the conversion of uracil and 5-phospho-alpha-D-ribose 1-diphosphate (PRPP) to UMP and diphosphate. The protein is Uracil phosphoribosyltransferase of Hahella chejuensis (strain KCTC 2396).